Here is a 323-residue protein sequence, read N- to C-terminus: Staphylococcal-like nuclease CAN1 (323 aa).

Residue Gly-2 is the site of N-myristoyl glycine attachment. Cys-11 is lipidated: S-palmitoyl cysteine. The 177-residue stretch at 130-306 (NTLPVDTKSV…RQKRVGLWAS (177 aa)) folds into the TNase-like domain. Position 143 (Asp-143) interacts with Ca(2+). Residue Arg-213 is part of the active site. A Ca(2+)-binding site is contributed by Asp-218. Residues Glu-221 and Arg-255 contribute to the active site.

The protein belongs to the thermonuclease family. Requires Ca(2+) as cofactor.

The protein resides in the cell membrane. With respect to regulation, inhibited by Zn(2+). Enzyme that catalyzes the hydrolysis of both DNA and RNA at the 5' position of the phosphodiester bond. Possesses activity toward the single-stranded DNA, double-stranded DNA and RNA. May be involved in genomic DNA degradation during programmed cell death. The polypeptide is Staphylococcal-like nuclease CAN1 (CAN1) (Arabidopsis thaliana (Mouse-ear cress)).